A 444-amino-acid polypeptide reads, in one-letter code: Acyl-CoA 6-desaturase (444 aa).

At 1–131 (MGKGGNQGEG…DMNLFKTNHV (131 aa)) the chain is on the cytoplasmic side. A Cytochrome b5 heme-binding domain is found at 18–95 (VPTFSWEEIQ…LKPLLIGELA (78 aa)). The chain crosses the membrane as a helical span at residues 132–152 (FFLLLLAHIIALESIAWFTVF). Residues 153 to 157 (YFGNG) lie on the Lumenal side of the membrane. A helical transmembrane segment spans residues 158-178 (WISTLITAFVLATSQAQAGWL). The Cytoplasmic segment spans residues 179–264 (QHDYGHLSVY…KYLPYNHQHE (86 aa)). The Histidine box-1 motif lies at 180–184 (HDYGH). The Histidine box-2 motif lies at 217–221 (HFQHH). The helical transmembrane segment at 265–285 (YFFLIGPPLLIPMYFQYQIIM) threads the bilayer. Over 286–305 (TMIVHKNWVDLAWAISYYIR) the chain is Lumenal. Residues 306–326 (FFITYIPFYGILGALLFLNFI) traverse the membrane as a helical segment. Topologically, residues 327 to 444 (RFLESHWFVW…KLWLDAYLHK (118 aa)) are cytoplasmic. The Histidine box-3 signature appears at 382–386 (QIEHH).

The protein belongs to the fatty acid desaturase type 1 family.

Its subcellular location is the endoplasmic reticulum membrane. The enzyme catalyses (9Z,12Z)-octadecadienoyl-CoA + 2 Fe(II)-[cytochrome b5] + O2 + 2 H(+) = (6Z,9Z,12Z)-octadecatrienoyl-CoA + 2 Fe(III)-[cytochrome b5] + 2 H2O. It catalyses the reaction (9Z,12Z,15Z)-octadecatrienoyl-CoA + 2 Fe(II)-[cytochrome b5] + O2 + 2 H(+) = (6Z,9Z,12Z,15Z)-octadecatetraenoyl-CoA + 2 Fe(III)-[cytochrome b5] + 2 H2O. It carries out the reaction (9Z,12Z,15Z,18Z,21Z)-tetracosapentaenoyl-CoA + 2 Fe(II)-[cytochrome b5] + O2 + 2 H(+) = (6Z,9Z,12Z,15Z,18Z,21Z)-tetracosahexaenoyl-CoA + 2 Fe(III)-[cytochrome b5] + 2 H2O. The catalysed reaction is (11E)-octadecenoyl-CoA + 2 Fe(II)-[cytochrome b5] + O2 + 2 H(+) = (6Z,11E)-octadecadienoyl-CoA + 2 Fe(III)-[cytochrome b5] + 2 H2O. The enzyme catalyses (11Z,14Z)-eicosadienoyl-CoA + 2 Fe(II)-[cytochrome b5] + O2 + 2 H(+) = (8Z,11Z,14Z)-eicosatrienoyl-CoA + 2 Fe(III)-[cytochrome b5] + 2 H2O. It catalyses the reaction (11Z,14Z,17Z)-eicosatrienoyl-CoA + 2 Fe(II)-[cytochrome b5] + O2 + 2 H(+) = (8Z,11Z,14Z,17Z)-eicosatetraenoyl-CoA + 2 Fe(III)-[cytochrome b5] + 2 H2O. Its pathway is lipid metabolism; polyunsaturated fatty acid biosynthesis. Its function is as follows. Involved in the biosynthesis of highly unsaturated fatty acids (HUFA) from the essential polyunsaturated fatty acids (PUFA) linoleic acid (LA) (18:2n-6) and alpha-linolenic acid (ALA) (18:3n-3) precursors, acting as a fatty acyl-coenzyme A (CoA) desaturase that introduces a cis double bond at carbon 6 of the fatty acyl chain. Catalyzes the first and rate limiting step in this pathway which is the desaturation of LA (18:2n-6) and ALA (18:3n-3) into gamma-linoleate (GLA) (18:3n-6) and stearidonate (18:4n-3), respectively. Subsequently, in the biosynthetic pathway of HUFA n-3 series, it desaturates tetracosapentaenoate (24:5n-3) to tetracosahexaenoate (24:6n-3), which is then converted to docosahexaenoate (DHA)(22:6n-3), an important lipid for nervous system function. It can also desaturate (11E)-octadecenoate (trans-vaccenoate) at carbon 6 generating (6Z,11E)-octadecadienoate. In addition to Delta-6 activity, this enzyme exhibits Delta-8 activity with slight biases toward n-3 fatty acyl-CoA substrates. This Pongo abelii (Sumatran orangutan) protein is Acyl-CoA 6-desaturase (FADS2).